We begin with the raw amino-acid sequence, 160 residues long: Ribosomal RNA large subunit methyltransferase H (160 aa).

Gly108 contributes to the S-adenosyl-L-methionine binding site.

The protein belongs to the RNA methyltransferase RlmH family. As to quaternary structure, homodimer.

The protein resides in the cytoplasm. It catalyses the reaction pseudouridine(1915) in 23S rRNA + S-adenosyl-L-methionine = N(3)-methylpseudouridine(1915) in 23S rRNA + S-adenosyl-L-homocysteine + H(+). Its function is as follows. Specifically methylates the pseudouridine at position 1915 (m3Psi1915) in 23S rRNA. This Rhodopseudomonas palustris (strain BisA53) protein is Ribosomal RNA large subunit methyltransferase H.